A 469-amino-acid polypeptide reads, in one-letter code: 3-isopropylmalate dehydratase large subunit (469 aa).

[4Fe-4S] cluster-binding residues include C349, C410, and C413.

This sequence belongs to the aconitase/IPM isomerase family. LeuC type 1 subfamily. In terms of assembly, heterodimer of LeuC and LeuD. It depends on [4Fe-4S] cluster as a cofactor.

It carries out the reaction (2R,3S)-3-isopropylmalate = (2S)-2-isopropylmalate. Its pathway is amino-acid biosynthesis; L-leucine biosynthesis; L-leucine from 3-methyl-2-oxobutanoate: step 2/4. Its function is as follows. Catalyzes the isomerization between 2-isopropylmalate and 3-isopropylmalate, via the formation of 2-isopropylmaleate. The protein is 3-isopropylmalate dehydratase large subunit of Neisseria meningitidis serogroup A / serotype 4A (strain DSM 15465 / Z2491).